A 91-amino-acid chain; its full sequence is Cell division topological specificity factor (91 aa).

Belongs to the MinE family.

Its function is as follows. Prevents the cell division inhibition by proteins MinC and MinD at internal division sites while permitting inhibition at polar sites. This ensures cell division at the proper site by restricting the formation of a division septum at the midpoint of the long axis of the cell. This Desulfitobacterium hafniense (strain DSM 10664 / DCB-2) protein is Cell division topological specificity factor.